A 185-amino-acid chain; its full sequence is UPF0200 protein TK1334 (185 aa).

7 to 14 (GMPGSGKS) is an ATP binding site.

This sequence belongs to the UPF0200 family.

This chain is UPF0200 protein TK1334, found in Thermococcus kodakarensis (strain ATCC BAA-918 / JCM 12380 / KOD1) (Pyrococcus kodakaraensis (strain KOD1)).